Reading from the N-terminus, the 369-residue chain is Allantoicase (369 aa).

Positions 341–369 are disordered; sequence PDSKNNNNNNNNNNNNNTSNSFKTSDRQQ. Positions 345 to 357 are enriched in low complexity; that stretch reads NNNNNNNNNNNNN.

Belongs to the allantoicase family.

It catalyses the reaction allantoate + H2O = (S)-ureidoglycolate + urea. It participates in nitrogen metabolism; (S)-allantoin degradation; (S)-ureidoglycolate from allantoate (aminidohydrolase route): step 1/1. Utilization of purines as secondary nitrogen sources, when primary sources are limiting. This Dictyostelium discoideum (Social amoeba) protein is Allantoicase (allC).